Reading from the N-terminus, the 304-residue chain is D-alanine--D-alanine ligase (304 aa).

Residues 103 to 299 form the ATP-grasp domain; it reads KLIWQALGLP…FADLCIEILK (197 aa). 129–184 serves as a coordination point for ATP; the sequence is EEKLGLPMFVKPAAEGSSVGVVKVKGKGRLKSVYEELKHFQGEIIAERFIGGGEYS. The Mg(2+) site is built by aspartate 253, glutamate 266, and asparagine 268.

Belongs to the D-alanine--D-alanine ligase family. Mg(2+) is required as a cofactor. It depends on Mn(2+) as a cofactor.

It localises to the cytoplasm. It carries out the reaction 2 D-alanine + ATP = D-alanyl-D-alanine + ADP + phosphate + H(+). The protein operates within cell wall biogenesis; peptidoglycan biosynthesis. Functionally, cell wall formation. In Neisseria meningitidis serogroup A / serotype 4A (strain DSM 15465 / Z2491), this protein is D-alanine--D-alanine ligase.